We begin with the raw amino-acid sequence, 235 residues long: N-alpha-acetyltransferase 10 (235 aa).

Position 1 is an N-acetylmethionine (M1). Residues 1–58 (MNIRNARPEDLMNMQHCNLLCLPENYQMKYYFYHGLSWPQLSYIAEDENGKIVGYVLA) form an interaction with NAA15 region. The 152-residue stretch at 1–152 (MNIRNARPED…DAYAMKRDLT (152 aa)) folds into the N-acetyltransferase domain. K136 bears the N6-acetyllysine; by autocatalysis mark. Residues 196–213 (EEKGLAAEDSGGDSKDLS) are compositionally biased toward basic and acidic residues. Residues 196-235 (EEKGLAAEDSGGDSKDLSEVSETTESTDVKDSSEASDSAS) form a disordered region. A Phosphoserine modification is found at S205. S209 carries the phosphoserine; by IKKB modification. Residues S213 and S216 each carry the phosphoserine modification.

This sequence belongs to the acetyltransferase family. ARD1 subfamily. Component of the N-terminal acetyltransferase A complex (also called the NatA complex) composed of NAA10 and NAA15. Interacts with NAA15. Component of the N-terminal acetyltransferase A (NatA)/HYPK complex at least composed of NAA10, NAA15 and HYPK, which has N-terminal acetyltransferase activity. In complex with NAA15, interacts with HYPK. Component of the N-terminal acetyltransferase E (NatE) complex at least composed of NAA10, NAA15 and NAA50. Within the complex interacts with NAA15; the interaction is required for binding to NAAT50. Interacts with NAAT50. The interaction of the NatA complex with NAA50 reduces the acetylation activity of the NatA complex. Component of the N-terminal acetyltransferase E (NatE)/HYPK complex at least composed of NAA10, NAA15, NAA50 and HYPK. In complex with NAA15, interacts with HYPK; the interaction with HYPK reduces the capacity of the NatA complex to interact with NAA50. Interacts with HIF1A (via its ODD domain); the interaction increases HIF1A protein stability during normoxia, an down-regulates it when induced by hypoxia. Interacts with the ribosome. Binds to MYLK. Interacts with NAA16. Interacts (via its C-terminal domain) with TSC2, leading to its acetylation. Interacts with IKBKB. Interacts with HSPA1A and HSPA1B leading to its acetylation. In terms of processing, cleaved by caspases during apoptosis. Phosphorylation by IKBKB/IKKB at Ser-209 destabilises NAA10 and promotes its proteasome-mediated degradation. Post-translationally, autoacetylated at Lys-136 which stimulates its catalytic activity. As to expression, ubiquitous.

The protein localises to the cytoplasm. It is found in the nucleus. The catalysed reaction is N-terminal glycyl-[protein] + acetyl-CoA = N-terminal N(alpha)-acetylglycyl-[protein] + CoA + H(+). The enzyme catalyses N-terminal L-alanyl-[protein] + acetyl-CoA = N-terminal N(alpha)-acetyl-L-alanyl-[protein] + CoA + H(+). It catalyses the reaction N-terminal L-seryl-[protein] + acetyl-CoA = N-terminal N(alpha)-acetyl-L-seryl-[protein] + CoA + H(+). It carries out the reaction N-terminal L-valyl-[protein] + acetyl-CoA = N-terminal N(alpha)-acetyl-L-valyl-[protein] + CoA + H(+). The catalysed reaction is N-terminal L-cysteinyl-[protein] + acetyl-CoA = N-terminal N(alpha)-acetyl-L-cysteinyl-[protein] + CoA + H(+). The enzyme catalyses N-terminal L-threonyl-[protein] + acetyl-CoA = N-terminal N(alpha)-acetyl-L-threonyl-[protein] + CoA + H(+). In terms of biological role, catalytic subunit of the N-terminal acetyltransferase A (NatA) complex which displays alpha (N-terminal) acetyltransferase activity. Acetylates amino termini that are devoid of initiator methionine. The alpha (N-terminal) acetyltransferase activity may be important for vascular, hematopoietic and neuronal growth and development. Without NAA15, displays epsilon (internal) acetyltransferase activity towards HIF1A, thereby promoting its degradation. Represses MYLK kinase activity by acetylation, and thus represses tumor cell migration. Acetylates, and stabilizes TSC2, thereby repressing mTOR activity and suppressing cancer development. Acetylates HSPA1A and HSPA1B at 'Lys-77' which enhances its chaperone activity and leads to preferential binding to co-chaperone HOPX. Acetylates HIST1H4A. Acts as a negative regulator of sister chromatid cohesion during mitosis. In Mus musculus (Mouse), this protein is N-alpha-acetyltransferase 10 (Naa10).